A 111-amino-acid polypeptide reads, in one-letter code: MICOS complex subunit MIC13 (111 aa).

A helical transmembrane segment spans residues 8-26; the sequence is VVKFATKVTIAGGALYVAY.

It belongs to the MICOS complex subunit Mic13 family. As to quaternary structure, component of the mitochondrial contact site and cristae organizing system (MICOS) complex.

The protein localises to the mitochondrion inner membrane. Component of the MICOS complex, a large protein complex of the mitochondrial inner membrane that plays crucial roles in the maintenance of crista junctions, inner membrane architecture, and formation of contact sites to the outer membrane. Constituent of mature MICOS complex, it is required for the formation of cristae junction (CJ) and maintenance of cristae morphology. Required for the incorporation of MIC10 into the MICOS complex. The chain is MICOS complex subunit MIC13 from Danio rerio (Zebrafish).